Consider the following 346-residue polypeptide: 3-isopropylmalate dehydrogenase (346 aa).

76–87 (GPKWTDPNNRPE) is an NAD(+) binding site. Positions 94, 104, 132, and 217 each coordinate substrate. Residues aspartate 217, aspartate 241, and aspartate 245 each coordinate Mg(2+). 275 to 287 (GSAPDIANQDIAN) lines the NAD(+) pocket.

The protein belongs to the isocitrate and isopropylmalate dehydrogenases family. LeuB type 1 subfamily. As to quaternary structure, homodimer. It depends on Mg(2+) as a cofactor. Requires Mn(2+) as cofactor.

The protein resides in the cytoplasm. The enzyme catalyses (2R,3S)-3-isopropylmalate + NAD(+) = 4-methyl-2-oxopentanoate + CO2 + NADH. It participates in amino-acid biosynthesis; L-leucine biosynthesis; L-leucine from 3-methyl-2-oxobutanoate: step 3/4. Functionally, catalyzes the oxidation of 3-carboxy-2-hydroxy-4-methylpentanoate (3-isopropylmalate) to 3-carboxy-4-methyl-2-oxopentanoate. The product decarboxylates to 4-methyl-2 oxopentanoate. This is 3-isopropylmalate dehydrogenase from Staphylococcus saprophyticus subsp. saprophyticus (strain ATCC 15305 / DSM 20229 / NCIMB 8711 / NCTC 7292 / S-41).